The primary structure comprises 839 residues: LPS-assembly protein LptD (839 aa).

The signal sequence occupies residues 1–21; that stretch reads MAIGITACVLSLINYQGLAYS.

Belongs to the LptD family. Component of the lipopolysaccharide transport and assembly complex. Interacts with LptE and LptA.

The protein localises to the cell outer membrane. Its function is as follows. Together with LptE, is involved in the assembly of lipopolysaccharide (LPS) at the surface of the outer membrane. In Legionella pneumophila subsp. pneumophila (strain Philadelphia 1 / ATCC 33152 / DSM 7513), this protein is LPS-assembly protein LptD.